The following is a 974-amino-acid chain: MLQRAASNAYSWWAASHIRTKQSKWLEQSLHDMQGRVESVIKLIEEDGDSFAKRAEMYYKKRPELINFVEESYRAYRALAERYDHLSKELQTANNTIATIFPEQIQLAMDEEDEYGAPKMPKDFLQMPASGSNIPKVPPKAPIKDLKGLMSTASKQKQGKQSSKIEDAAKSGLSKNEAIEEIDKLQKDILALQTMKEFIRSSYQSSLEKFRGLENQIMEKQQKICELEDEFGEGRVIEDAEACTLMAEAALQSCQETVTQLQEKQESYTQEAREEFKKIEDACNKLNSFRHKYLGDQIDEAKVYISPIQEVDKEIESLQEKIKDQIDATSKGSLTMSQLAEKIDELVNKVVSLETAVSSQTLLLERFRAEADELQAQVQTLEDDKAALTDTHNLNIRVTAIEAKLQNIENLNKDVVNQNSCLRTHFVEARANIDHLSDKLSSVQPDEEIDGTDSSPDQVIALAEIKLEEESLKQKDHPSSAEGLKNLSTIKAEGPKNLSTIKTEGPKSLSTIKAEGPKNLSTIKAEGPKNLSTIKTEGPKSLSTIETEVPKNLSTIKTEDKEVRKQQGSSTVVSDKKTTMKHVTFAQPTPAEKGDEKVSAQSGNTSVYETHTQKSAEKDDELNWQQMLLSGLDDKENILLNEYTAILKNYKEVTKKLSDIEKKDRDTEFELTLQTRELKSAIAKRDEEIHNLRQKLSLMQQGNASENKALKEELLDPSDPSSARGLKPEDLPQIKDGDDEEDVKTILVDQRATVSPLEGKLRMSIDAILDENLDFWLRFSSAFHQIQKFKTTVHDLQNEISKARDKEMQGNSPRVDVKSEIRPLYKHMKEIQNELTVWLEQTLSLKDELERRFSALCSIQEEISKGLKEEVEDETTFSSHQAAKFQGEVLNMKHENKKVREELEAGISRVTILQEDVEKTVTQLDQEFGLTGNQSQLMQSVSKSRIPLQSFIFGTKPKKEKRSLFSRMNPNRKF.

The NAB domain occupies 10 to 90; sequence YSWWAASHIR…ERYDHLSKEL (81 aa). The disordered stretch occupies residues 151–170; sequence STASKQKQGKQSSKIEDAAK. The stretch at 173-423 forms a coiled coil; sequence LSKNEAIEEI…DVVNQNSCLR (251 aa). The disordered stretch occupies residues 586-614; that stretch reads AQPTPAEKGDEKVSAQSGNTSVYETHTQK. Over residues 599 to 610 the composition is skewed to polar residues; sequence SAQSGNTSVYET. The stretch at 641–697 forms a coiled coil; that stretch reads NEYTAILKNYKEVTKKLSDIEKKDRDTEFELTLQTRELKSAIAKRDEEIHNLRQKLS. Positions 714–740 are disordered; that stretch reads LLDPSDPSSARGLKPEDLPQIKDGDDE. Residues 726 to 736 show a composition bias toward basic and acidic residues; that stretch reads LKPEDLPQIKD. Coiled coils occupy residues 784-807 and 882-905; these read HQIQ…RDKE and AAKF…ELEA.

As to quaternary structure, homodimer or homooligomer. Interacts with PRK1. In terms of processing, phosphorylated by PRK1. In terms of tissue distribution, expressed in mature pollen grains and pollen tubes, but not in style, ovary, petal, leaf, root or sepal.

Its subcellular location is the cytoplasm. Probably involved in the receptor-like kinase-mediated signal transduction pathway. In Petunia integrifolia (Violet-flowered petunia), this protein is Kinase-interacting protein 1.